The sequence spans 61 residues: Small ribosomal subunit protein uS14 (61 aa).

Zn(2+) contacts are provided by Cys24, Cys27, Cys40, and Cys43.

It belongs to the universal ribosomal protein uS14 family. Zinc-binding uS14 subfamily. As to quaternary structure, part of the 30S ribosomal subunit. Contacts proteins S3 and S10. The cofactor is Zn(2+).

Binds 16S rRNA, required for the assembly of 30S particles and may also be responsible for determining the conformation of the 16S rRNA at the A site. The polypeptide is Small ribosomal subunit protein uS14 (Beutenbergia cavernae (strain ATCC BAA-8 / DSM 12333 / CCUG 43141 / JCM 11478 / NBRC 16432 / NCIMB 13614 / HKI 0122)).